The following is a 517-amino-acid chain: Keratin-associated protein 16-1 (517 aa).

11 consecutive repeat copies span residues Cys-73–Val-77, Cys-93–Thr-97, Cys-128–Val-132, Cys-153–Ala-157, Cys-168–Val-172, Cys-198–Val-202, Cys-208–Val-212, Cys-228–Val-232, Cys-248–Ser-252, Cys-283–Ser-287, and Cys-303–Ser-307. Residues Cys-73–Ser-307 form an 11 X 5 AA repeats of C-C-X(3) region. The interval Val-483–Cys-517 is disordered. Residues Ala-504 to Cys-517 show a composition bias toward low complexity.

The protein belongs to the KRTAP type 16 family.

The chain is Keratin-associated protein 16-1 (KRTAP16-1) from Homo sapiens (Human).